The following is a 229-amino-acid chain: Large ribosomal subunit protein uL1 (229 aa).

It belongs to the universal ribosomal protein uL1 family. Part of the 50S ribosomal subunit.

Its function is as follows. Binds directly to 23S rRNA. The L1 stalk is quite mobile in the ribosome, and is involved in E site tRNA release. Functionally, protein L1 is also a translational repressor protein, it controls the translation of the L11 operon by binding to its mRNA. In Clostridium botulinum (strain Alaska E43 / Type E3), this protein is Large ribosomal subunit protein uL1.